A 642-amino-acid chain; its full sequence is Threonine--tRNA ligase (642 aa).

In terms of domain architecture, TGS spans 1 to 61 (MPIITLPDGS…EADASLAIIT (61 aa)). A catalytic region spans residues 243–534 (DHRKIGKQLD…LTEEYAGLFP (292 aa)). Positions 334, 385, and 511 each coordinate Zn(2+).

This sequence belongs to the class-II aminoacyl-tRNA synthetase family. In terms of assembly, homodimer. It depends on Zn(2+) as a cofactor.

The protein localises to the cytoplasm. It carries out the reaction tRNA(Thr) + L-threonine + ATP = L-threonyl-tRNA(Thr) + AMP + diphosphate + H(+). Catalyzes the attachment of threonine to tRNA(Thr) in a two-step reaction: L-threonine is first activated by ATP to form Thr-AMP and then transferred to the acceptor end of tRNA(Thr). Also edits incorrectly charged L-seryl-tRNA(Thr). This chain is Threonine--tRNA ligase, found in Aeromonas hydrophila subsp. hydrophila (strain ATCC 7966 / DSM 30187 / BCRC 13018 / CCUG 14551 / JCM 1027 / KCTC 2358 / NCIMB 9240 / NCTC 8049).